The primary structure comprises 380 residues: 12-oxophytodienoate reductase 1 (380 aa).

FMN is bound by residues 35–37 (PLT), Ala68, and Gln110. A substrate-binding site is contributed by 182–185 (HGAH). Catalysis depends on Tyr187, which acts as the Proton donor. An FMN-binding site is contributed by Arg234. Arg275 lines the substrate pocket. FMN contacts are provided by residues Gly305 and 326 to 327 (GR).

It belongs to the NADH:flavin oxidoreductase/NADH oxidase family. Requires FMN as cofactor.

The enzyme catalyses (1S,2S)-OPC-8 + NADP(+) = (9S,13S,15Z)-12-oxophyto-10,15-dienoate + NADPH + H(+). The protein operates within lipid metabolism; oxylipin biosynthesis. In terms of biological role, probably involved in the biosynthesis or metabolism of oxylipin signaling molecules. In vitro, reduces cis(-)-12-oxophytodienoic acid (cis(-)-OPDA) and to cis(-)-OPC-8:0. The sequence is that of 12-oxophytodienoate reductase 1 from Oryza sativa subsp. japonica (Rice).